A 1506-amino-acid polypeptide reads, in one-letter code: Phosphatidylinositol 3-kinase C2 domain-containing subunit gamma (1506 aa).

A disordered region spans residues 1 to 34 (MAYSWQTEPNRTEPQEDGSDTQQFHHTNQHLSSR). Residues 20–34 (DTQQFHHTNQHLSSR) show a composition bias toward polar residues. A PI3K-RBD domain is found at 285 to 371 (DTKFRVKISI…IQLHLQKNRD (87 aa)). The C2 PI3K-type domain occupies 541 to 689 (LQSHLSFTVC…SPLTLQIDFP (149 aa)). Positions 704-880 (RTDHEEPPRE…QELLAALQFC (177 aa)) constitute a PIK helical domain. One can recognise a PI3K/PI4K catalytic domain in the interval 949 to 1227 (DRDACSYFTS…KIKESLECFP (279 aa)). The interval 955-961 (YFTSNAS) is G-loop. The tract at residues 1091–1099 (GVCDRHNDN) is catalytic loop. Positions 1110–1136 (HIDFGKFLGHAQTFGGIKRDRAPFIFT) are activation loop. A PX domain is found at 1260–1372 (LNKTRTIQRV…SFFLSEHIQP (113 aa)). Residues 1381–1506 (DPGENSLDKS…KWYPLGNSII (126 aa)) enclose the C2 domain.

Belongs to the PI3/PI4-kinase family. As to expression, expressed predominantly in liver. Also found in kidney, lung and lymphoid tissue. Down-regulated in BeF3 cells expressing the BCR-ABL oncogene p185.

It localises to the membrane. It carries out the reaction a 1,2-diacyl-sn-glycero-3-phospho-(1D-myo-inositol 4-phosphate) + ATP = a 1,2-diacyl-sn-glycero-3-phospho-(1D-myo-inositol-3,4-bisphosphate) + ADP + H(+). The catalysed reaction is a 1,2-diacyl-sn-glycero-3-phospho-(1D-myo-inositol) + ATP = a 1,2-diacyl-sn-glycero-3-phospho-(1D-myo-inositol-3-phosphate) + ADP + H(+). Its function is as follows. Generates phosphatidylinositol 3-phosphate (PtdIns3P) and phosphatidylinositol 3,4-bisphosphate (PtdIns(3,4)P2) that act as second messengers. May play a role in SDF1A-stimulated chemotaxis. The chain is Phosphatidylinositol 3-kinase C2 domain-containing subunit gamma (Pik3c2g) from Mus musculus (Mouse).